Reading from the N-terminus, the 291-residue chain is MSLITFKAGKLRRVPGTKLLRADPEKGYIVMNRDAYGLIHFQWAKRNDLENPEDDIIVFSSECTFEKVTECTTGRAYMLKYPSSAHSLFYWMQEASDDNDTSYAERINSYIKDQDLLDPARSDVATVSDMMEVDTVEQSEPIAQPTESSKESSEIGAPNSDEINSSEAVRNLLATISAQAGFGGSTVDLCEILKPSNLTDLLCQEGVIDRLMPYMPPDTPNNLEGVLAIVSSPQYAQALRSFSQALNSPGGVNIISALGLSLDESANPNEGGALQFLKAIARFVSRNNGSE.

Positions 1 to 114 constitute a Pru domain; it reads MSLITFKAGK…ERINSYIKDQ (114 aa). The disordered stretch occupies residues 135–162; it reads TVEQSEPIAQPTESSKESSEIGAPNSDE. The region spanning 178 to 290 is the DEUBAD domain; the sequence is AQAGFGGSTV…ARFVSRNNGS (113 aa).

This sequence belongs to the ADRM1 family. In terms of assembly, component of the 19S proteasome regulatory particle complex. The 2 S.pombe rpn13 homologs, rpn1301 and rpn1302 are present at a 0.2-1 ratio.

The protein resides in the cytoplasm. It is found in the nucleus. Component of the 26S proteasome, a multiprotein complex involved in the ATP-dependent degradation of ubiquitinated proteins. This complex plays a key role in the maintenance of protein homeostasis by removing misfolded or damaged proteins, which could impair cellular functions, and by removing proteins whose functions are no longer required. Therefore, the proteasome participates in numerous cellular processes, including cell cycle progression, apoptosis, or DNA damage repair. Within the complex, functions as a proteasomal ubiquitin receptor. This Schizosaccharomyces pombe (strain 972 / ATCC 24843) (Fission yeast) protein is Proteasomal ubiquitin receptor ADRM1 homolog rpn1301 (rpn1301).